The sequence spans 206 residues: Small ribosomal subunit protein uS4 (206 aa).

Positions 96–156 (TRLDNVVYRM…EKSRTQARIK (61 aa)) constitute an S4 RNA-binding domain.

The protein belongs to the universal ribosomal protein uS4 family. In terms of assembly, part of the 30S ribosomal subunit. Contacts protein S5. The interaction surface between S4 and S5 is involved in control of translational fidelity.

Its function is as follows. One of the primary rRNA binding proteins, it binds directly to 16S rRNA where it nucleates assembly of the body of the 30S subunit. With S5 and S12 plays an important role in translational accuracy. This Shewanella amazonensis (strain ATCC BAA-1098 / SB2B) protein is Small ribosomal subunit protein uS4.